A 186-amino-acid chain; its full sequence is Peptidyl-tRNA hydrolase (186 aa).

TRNA is bound at residue Y14. H19 functions as the Proton acceptor in the catalytic mechanism. Residues Y61, N63, and N107 each coordinate tRNA.

It belongs to the PTH family. As to quaternary structure, monomer.

It is found in the cytoplasm. The enzyme catalyses an N-acyl-L-alpha-aminoacyl-tRNA + H2O = an N-acyl-L-amino acid + a tRNA + H(+). Its function is as follows. Hydrolyzes ribosome-free peptidyl-tRNAs (with 1 or more amino acids incorporated), which drop off the ribosome during protein synthesis, or as a result of ribosome stalling. Catalyzes the release of premature peptidyl moieties from peptidyl-tRNA molecules trapped in stalled 50S ribosomal subunits, and thus maintains levels of free tRNAs and 50S ribosomes. In Helicobacter pylori (strain P12), this protein is Peptidyl-tRNA hydrolase.